Here is a 507-residue protein sequence, read N- to C-terminus: ATP synthase subunit alpha, chloroplastic (507 aa).

G170–T177 contributes to the ATP binding site.

This sequence belongs to the ATPase alpha/beta chains family. F-type ATPases have 2 components, CF(1) - the catalytic core - and CF(0) - the membrane proton channel. CF(1) has five subunits: alpha(3), beta(3), gamma(1), delta(1), epsilon(1). CF(0) has four main subunits: a, b, b' and c.

Its subcellular location is the plastid. The protein localises to the chloroplast thylakoid membrane. The catalysed reaction is ATP + H2O + 4 H(+)(in) = ADP + phosphate + 5 H(+)(out). In terms of biological role, produces ATP from ADP in the presence of a proton gradient across the membrane. The alpha chain is a regulatory subunit. The sequence is that of ATP synthase subunit alpha, chloroplastic from Piper cenocladum (Ant piper).